The following is a 435-amino-acid chain: Maltodextrin transport system permease protein MdxF (435 aa).

8 helical membrane passes run 35 to 55 (LLFLAITGLFAFELCVFGIQA), 73 to 93 (FMLIEGTLQLIVTMIFLMFYI), 136 to 156 (AYIMMVFVIIFPVLVTLFVAL), 199 to 219 (VIWTICATTLQIILGIVTALF), 234 to 254 (IFLFPWAVPAFITIMSFSNMF), 293 to 313 (LIMIQTWLGFPYIYVMVTGVL), 337 to 357 (HITFPMILFATAPVMITQYTF), and 403 to 423 (VAAAVTLLISFIVIGISLIAF). The 228-residue stretch at 195-422 (LGWTVIWTIC…FIVIGISLIA (228 aa)) folds into the ABC transmembrane type-1 domain.

It belongs to the binding-protein-dependent transport system permease family. MalFG subfamily. The complex is composed of two ATP-binding proteins (MsmX), two transmembrane proteins (MdxF and MdxG) and a solute-binding protein (MdxE).

The protein localises to the cell membrane. Its function is as follows. Part of the ABC transporter complex involved in maltodextrin import. Probably responsible for the translocation of the substrate across the membrane. In Bacillus subtilis (strain 168), this protein is Maltodextrin transport system permease protein MdxF (mdxF).